The following is an 86-amino-acid chain: Putative regulatory protein BBR47_37350 (86 aa).

This sequence belongs to the RemA family.

The chain is Putative regulatory protein BBR47_37350 from Brevibacillus brevis (strain 47 / JCM 6285 / NBRC 100599).